A 211-amino-acid chain; its full sequence is Thymidylate kinase (211 aa).

10–17 (GPDGAGKT) provides a ligand contact to ATP.

The protein belongs to the thymidylate kinase family.

The enzyme catalyses dTMP + ATP = dTDP + ADP. Its function is as follows. Phosphorylation of dTMP to form dTDP in both de novo and salvage pathways of dTTP synthesis. This chain is Thymidylate kinase (tmk), found in Lactococcus lactis subsp. lactis (strain IL1403) (Streptococcus lactis).